Here is a 270-residue protein sequence, read N- to C-terminus: 3-phenylpropionate-dihydrodiol/cinnamic acid-dihydrodiol dehydrogenase (270 aa).

10 to 34 (FITGGGSGLGLALVERFIEEGAQVA) contacts NAD(+). Serine 143 contributes to the substrate binding site. The Proton acceptor role is filled by tyrosine 156.

This sequence belongs to the short-chain dehydrogenases/reductases (SDR) family.

It catalyses the reaction 3-(cis-5,6-dihydroxycyclohexa-1,3-dien-1-yl)propanoate + NAD(+) = 3-(2,3-dihydroxyphenyl)propanoate + NADH + H(+). The enzyme catalyses (2E)-3-(cis-5,6-dihydroxycyclohexa-1,3-dien-1-yl)prop-2-enoate + NAD(+) = (2E)-3-(2,3-dihydroxyphenyl)prop-2-enoate + NADH + H(+). It participates in aromatic compound metabolism; 3-phenylpropanoate degradation. In terms of biological role, converts 3-phenylpropionate-dihydrodiol (PP-dihydrodiol) and cinnamic acid-dihydrodiol (CI-dihydrodiol) into 3-(2,3-dihydroxylphenyl)propanoic acid (DHPP) and 2,3-dihydroxicinnamic acid (DHCI), respectively. This chain is 3-phenylpropionate-dihydrodiol/cinnamic acid-dihydrodiol dehydrogenase, found in Escherichia coli (strain SMS-3-5 / SECEC).